A 158-amino-acid polypeptide reads, in one-letter code: Small ribosomal subunit protein uS9 (158 aa).

Belongs to the universal ribosomal protein uS9 family.

In Brucella melitensis biotype 2 (strain ATCC 23457), this protein is Small ribosomal subunit protein uS9.